We begin with the raw amino-acid sequence, 504 residues long: Glycerol kinase (504 aa).

T12 provides a ligand contact to ADP. 3 residues coordinate ATP: T12, T13, and S14. A sn-glycerol 3-phosphate-binding site is contributed by T12. An ADP-binding site is contributed by R16. Sn-glycerol 3-phosphate is bound by residues R82, E83, Y134, and D244. Glycerol contacts are provided by R82, E83, Y134, D244, and Q245. ADP is bound by residues T266 and G309. ATP contacts are provided by T266, G309, Q313, and G410. Residues G410 and N414 each coordinate ADP.

It belongs to the FGGY kinase family. Homotetramer and homodimer (in equilibrium).

It catalyses the reaction glycerol + ATP = sn-glycerol 3-phosphate + ADP + H(+). The protein operates within polyol metabolism; glycerol degradation via glycerol kinase pathway; sn-glycerol 3-phosphate from glycerol: step 1/1. With respect to regulation, activated by phosphorylation and inhibited by fructose 1,6-bisphosphate (FBP). Key enzyme in the regulation of glycerol uptake and metabolism. Catalyzes the phosphorylation of glycerol to yield sn-glycerol 3-phosphate. The chain is Glycerol kinase from Alkaliphilus oremlandii (strain OhILAs) (Clostridium oremlandii (strain OhILAs)).